The following is a 340-amino-acid chain: MELGSLIRATNLWGYTDLMRELGADPLPFLRRFDIPPGIEHQEDAFMSLAGFVRMLEASAAELDCPDFGLRLARWQGLGILGPVAVIARNAATLFGGLEAIGRYLYVHSPALTLTVSSTTARSNVRFGYEVTEPGIPYPLQGYELSMANAARMIRLLGGPQARARVFSFRHAQLGTDAAYREALGCTVRFGRTWCGFEVDHRLAGRPIDHADPETKRIATKYLESQYLPSDATLSERVVGLARRLLPTGQCSAEAIADQLDMHPRTLQRRLAAEGLRCHDLIERERRAQAARYLAQPGLYLSQIAVLLGYSEQSALNRSCRRWFGMTPRQYRAYGGVSGR.

Residues E236 to Y334 form the HTH araC/xylS-type domain. 2 consecutive DNA-binding regions (H-T-H motif) follow at residues E254–G275 and L301–F324.

Phosphorylated by PknK. Phosphorylation increases affinity for the mymA promoter.

In terms of biological role, regulates the expression of the mymA operon. The chain is HTH-type transcriptional regulator VirS (virS) from Mycobacterium tuberculosis (strain CDC 1551 / Oshkosh).